Here is a 207-residue protein sequence, read N- to C-terminus: Cytochrome c biogenesis ATP-binding export protein CcmA (207 aa).

The ABC transporter domain occupies 4–207 (LEVRELLCER…RISLTQTRAV (204 aa)). Residue 36–43 (GSNGAGKT) participates in ATP binding.

This sequence belongs to the ABC transporter superfamily. CcmA exporter (TC 3.A.1.107) family. The complex is composed of two ATP-binding proteins (CcmA) and two transmembrane proteins (CcmB).

Its subcellular location is the cell inner membrane. The enzyme catalyses heme b(in) + ATP + H2O = heme b(out) + ADP + phosphate + H(+). Functionally, part of the ABC transporter complex CcmAB involved in the biogenesis of c-type cytochromes; once thought to export heme, this seems not to be the case, but its exact role is uncertain. Responsible for energy coupling to the transport system. The protein is Cytochrome c biogenesis ATP-binding export protein CcmA of Shigella dysenteriae serotype 1 (strain Sd197).